A 110-amino-acid chain; its full sequence is UPF0060 membrane protein ASA_2267 (110 aa).

The next 4 helical transmembrane spans lie at isoleucine 7–tryptophan 27, serine 33–leucine 53, alanine 63–isoleucine 83, and leucine 87–proline 107.

Belongs to the UPF0060 family.

The protein localises to the cell inner membrane. The polypeptide is UPF0060 membrane protein ASA_2267 (Aeromonas salmonicida (strain A449)).